We begin with the raw amino-acid sequence, 2140 residues long: Dedicator of cytokinesis protein 7 (2140 aa).

Residues serine 30, serine 180, and serine 182 each carry the phosphoserine modification. The disordered stretch occupies residues 138–183; it reads FNPNTLDKQKERQKGLPKQVFESDEAPDGNSYQDDQDDLKRRSMSI. Residues 365–395 are a coiled coil; it reads FKEADATKNKEKLEKLKSQADQFCQRLGKYR. Lysine 381 bears the N6-methyllysine mark. Position 450 is a phosphothreonine (threonine 450). A Phosphoserine modification is found at serine 452. The C2 DOCK-type domain occupies 561 to 727; it reads RNLLYIYPQS…GVFNVEVVAV (167 aa). A phosphoserine mark is found at serine 862, serine 864, serine 882, serine 888, serine 896, serine 900, and serine 905. Positions 888–901 are enriched in low complexity; that stretch reads SLNLNRSRSLSNSN. The disordered stretch occupies residues 888–971; the sequence is SLNLNRSRSL…MSSHTETSSF (84 aa). Residues threonine 907 and threonine 909 each carry the phosphothreonine modification. Residues serine 910, serine 929, serine 964, serine 1383, lysine 1390, alanine 1394, glutamate 1398, tyrosine 1421, serine 1425, arginine 1429, serine 1430, serine 1432, serine 1434, and serine 1438 each carry the phosphoserine modification. The span at 943–971 shows a compositional bias: polar residues; the sequence is SNPSPSAESTQAMDRSCNRMSSHTETSSF. Residues 1678 to 2114 enclose the DOCKER domain; the sequence is KGYQTSPDLR…LQPLINRKIP (437 aa). Lysine 1962 is subject to N6-acetyllysine. Residues 2086 to 2112 are a coiled coil; the sequence is DQKEYQRELERNYHRLKEALQPLINRK. The residue at position 2129 (serine 2129) is a Phosphoserine.

The protein belongs to the DOCK family. Component of the DOCK7-induced septin displacement/DISP complex, at least composed of DOCK7, LRCH3 and MYO6. Interacts with TSC1. Interacts with nucleotide-free RAC1 and RAC3. Interacts with TACC3 and CRY1. Interacts with NOD2. In terms of tissue distribution, widely expressed.

The protein resides in the cell projection. It is found in the axon. Functionally, functions as a guanine nucleotide exchange factor (GEF), which activates Rac1 and Rac3 Rho small GTPases by exchanging bound GDP for free GTP. Does not have a GEF activity for CDC42. Required for STMN1 'Ser-15' phosphorylation during axon formation and consequently for neuronal polarization. As part of the DISP complex, may regulate the association of septins with actin and thereby regulate the actin cytoskeleton. Has a role in pigmentation. Involved in the regulation of cortical neurogenesis through the control of radial glial cells (RGCs) proliferation versus differentiation; negatively regulates the basal-to-apical interkinetic nuclear migration of RGCs by antagonizing the microtubule growth-promoting function of TACC3. This is Dedicator of cytokinesis protein 7 (DOCK7) from Homo sapiens (Human).